The chain runs to 222 residues: Protein-L-isoaspartate O-methyltransferase (222 aa).

Residue serine 69 is part of the active site.

The protein belongs to the methyltransferase superfamily. L-isoaspartyl/D-aspartyl protein methyltransferase family.

It is found in the cytoplasm. It catalyses the reaction [protein]-L-isoaspartate + S-adenosyl-L-methionine = [protein]-L-isoaspartate alpha-methyl ester + S-adenosyl-L-homocysteine. Catalyzes the methyl esterification of L-isoaspartyl residues in peptides and proteins that result from spontaneous decomposition of normal L-aspartyl and L-asparaginyl residues. It plays a role in the repair and/or degradation of damaged proteins. The chain is Protein-L-isoaspartate O-methyltransferase from Caulobacter vibrioides (strain NA1000 / CB15N) (Caulobacter crescentus).